The chain runs to 596 residues: Elongation factor 4 (596 aa).

Residues 2–184 form the tr-type G domain; the sequence is KQIRNFSIIA…VIVAKIPPPE (183 aa). Residues 14-19 and 131-134 each bind GTP; these read DHGKST and NKID.

It belongs to the TRAFAC class translation factor GTPase superfamily. Classic translation factor GTPase family. LepA subfamily.

It is found in the cell inner membrane. The enzyme catalyses GTP + H2O = GDP + phosphate + H(+). In terms of biological role, required for accurate and efficient protein synthesis under certain stress conditions. May act as a fidelity factor of the translation reaction, by catalyzing a one-codon backward translocation of tRNAs on improperly translocated ribosomes. Back-translocation proceeds from a post-translocation (POST) complex to a pre-translocation (PRE) complex, thus giving elongation factor G a second chance to translocate the tRNAs correctly. Binds to ribosomes in a GTP-dependent manner. In Shewanella baltica (strain OS223), this protein is Elongation factor 4.